Consider the following 340-residue polypeptide: MRVYYDRDCDINLIKDKKVAILGYGSQGHAHALNLRDSGAKNVVVALREGSPSAKKAEAEGLKVMGIAEAAAWCDLIMFTMPDELQAETYRKYVHDNLREGSAIAFAHGLNVHFGLIEPKPGVDVIMMAPKGPGHTVRGEYVKGGGVPCLVAVHNDATGKAMEIGLSYCSAIGGGRSGIIETNFRQECETDLFGEQAVLCGGLVELIRMGFETLVEAGYEPEMAYFECLHEVKLIVDLIYEGGIANMNYSISNTAEYGEYVSGPRILPYEETKARMKAVLTDIQTGKFVRDFMQENAVGQPFFKATRRINDEHQIEQVGEKLRGMMPWISKGKMVDRARN.

Residues 1-182 (MRVYYDRDCD…GGGRSGIIET (182 aa)) enclose the KARI N-terminal Rossmann domain. NADP(+) is bound by residues 24–27 (YGSQ), R48, S51, S53, and 83–86 (DELQ). Residue H108 is part of the active site. G134 is an NADP(+) binding site. Residues 183 to 329 (NFRQECETDL…EKLRGMMPWI (147 aa)) form the KARI C-terminal knotted domain. Residues D191, E195, E227, and E231 each coordinate Mg(2+). S252 provides a ligand contact to substrate.

The protein belongs to the ketol-acid reductoisomerase family. The cofactor is Mg(2+).

It carries out the reaction (2R)-2,3-dihydroxy-3-methylbutanoate + NADP(+) = (2S)-2-acetolactate + NADPH + H(+). The catalysed reaction is (2R,3R)-2,3-dihydroxy-3-methylpentanoate + NADP(+) = (S)-2-ethyl-2-hydroxy-3-oxobutanoate + NADPH + H(+). It participates in amino-acid biosynthesis; L-isoleucine biosynthesis; L-isoleucine from 2-oxobutanoate: step 2/4. The protein operates within amino-acid biosynthesis; L-valine biosynthesis; L-valine from pyruvate: step 2/4. Its function is as follows. Involved in the biosynthesis of branched-chain amino acids (BCAA). Catalyzes an alkyl-migration followed by a ketol-acid reduction of (S)-2-acetolactate (S2AL) to yield (R)-2,3-dihydroxy-isovalerate. In the isomerase reaction, S2AL is rearranged via a Mg-dependent methyl migration to produce 3-hydroxy-3-methyl-2-ketobutyrate (HMKB). In the reductase reaction, this 2-ketoacid undergoes a metal-dependent reduction by NADPH to yield (R)-2,3-dihydroxy-isovalerate. In Cereibacter sphaeroides (strain ATCC 17023 / DSM 158 / JCM 6121 / CCUG 31486 / LMG 2827 / NBRC 12203 / NCIMB 8253 / ATH 2.4.1.) (Rhodobacter sphaeroides), this protein is Ketol-acid reductoisomerase (NADP(+)).